A 239-amino-acid chain; its full sequence is Ribose-5-phosphate isomerase A (239 aa).

Substrate is bound by residues 40–43 (SGST), 96–99 (DGAD), and 110–113 (KGGG). Catalysis depends on E119, which acts as the Proton acceptor. Substrate is bound at residue K137.

It belongs to the ribose 5-phosphate isomerase family. As to quaternary structure, homodimer.

It carries out the reaction aldehydo-D-ribose 5-phosphate = D-ribulose 5-phosphate. It participates in carbohydrate degradation; pentose phosphate pathway; D-ribose 5-phosphate from D-ribulose 5-phosphate (non-oxidative stage): step 1/1. Functionally, catalyzes the reversible conversion of ribose-5-phosphate to ribulose 5-phosphate. The sequence is that of Ribose-5-phosphate isomerase A from Methanococcus maripaludis (strain C7 / ATCC BAA-1331).